The sequence spans 78 residues: D-alanyl carrier protein (78 aa).

Positions Met-1–Lys-78 constitute a Carrier domain. Ser-36 bears the O-(pantetheine 4'-phosphoryl)serine mark.

Belongs to the DltC family. 4'-phosphopantetheine is transferred from CoA to a specific serine of apo-DCP.

The protein localises to the cytoplasm. It participates in cell wall biogenesis; lipoteichoic acid biosynthesis. In terms of biological role, carrier protein involved in the D-alanylation of lipoteichoic acid (LTA). The loading of thioester-linked D-alanine onto DltC is catalyzed by D-alanine--D-alanyl carrier protein ligase DltA. The DltC-carried D-alanyl group is further transferred to cell membrane phosphatidylglycerol (PG) by forming an ester bond, probably catalyzed by DltD. D-alanylation of LTA plays an important role in modulating the properties of the cell wall in Gram-positive bacteria, influencing the net charge of the cell wall. This is D-alanyl carrier protein from Staphylococcus carnosus (strain TM300).